Here is a 393-residue protein sequence, read N- to C-terminus: SH3 domain-binding protein 5-like (393 aa).

2 disordered regions span residues Met-1–Arg-59 and His-272–Thr-332. Position 13 is a phosphothreonine (Thr-13). The span at Leu-18–Pro-28 shows a compositional bias: basic and acidic residues. 2 positions are modified to phosphoserine: Ser-30 and Ser-49. Coiled-coil stretches lie at residues Arg-59–Ala-140 and Trp-169–His-272. Over residues Gly-304–Gly-313 the composition is skewed to gly residues. Residues Glu-317 to Thr-332 are compositionally biased toward low complexity. Phosphoserine occurs at positions 343, 350, 358, 362, and 378. The interval Asp-364–Leu-393 is disordered. Positions Gly-384–Leu-393 are enriched in basic residues.

The protein belongs to the SH3BP5 family.

Functionally, functions as a guanine nucleotide exchange factor (GEF) for RAB11A. This is SH3 domain-binding protein 5-like (SH3BP5L) from Pongo abelii (Sumatran orangutan).